The sequence spans 440 residues: Cobyrinate a,c-diamide synthase (440 aa).

The region spanning 247–428 (RIAIAYDAAF…MHLYFPSNPR (182 aa)) is the GATase cobBQ-type domain. The Nucleophile role is filled by C329.

The protein belongs to the CobB/CbiA family. It depends on Mg(2+) as a cofactor.

It catalyses the reaction cob(II)yrinate + 2 L-glutamine + 2 ATP + 2 H2O = cob(II)yrinate a,c diamide + 2 L-glutamate + 2 ADP + 2 phosphate + 2 H(+). Its pathway is cofactor biosynthesis; adenosylcobalamin biosynthesis; cob(II)yrinate a,c-diamide from sirohydrochlorin (anaerobic route): step 10/10. Its function is as follows. Catalyzes the ATP-dependent amidation of the two carboxylate groups at positions a and c of cobyrinate, using either L-glutamine or ammonia as the nitrogen source. This Picrophilus torridus (strain ATCC 700027 / DSM 9790 / JCM 10055 / NBRC 100828 / KAW 2/3) protein is Cobyrinate a,c-diamide synthase.